A 216-amino-acid chain; its full sequence is Endoplasmic reticulum vesicle protein 25 (216 aa).

The first 21 residues, 1–21 (MMVSLKSSLFFMLALLTVVHA), serve as a signal peptide directing secretion. The Lumenal portion of the chain corresponds to 22-184 (LNFDIPAKTN…TNESTNERVK (163 aa)). In terms of domain architecture, GOLD spans 34 to 150 (PFCLREYVGE…LEPVEADIRR (117 aa)). Residues 185 to 205 (NFAYLTFISLFVLVIWQILYL) traverse the membrane as a helical segment. Topologically, residues 206–216 (RSFFQRKHLIP) are cytoplasmic.

Belongs to the EMP24/GP25L family.

The protein resides in the endoplasmic reticulum membrane. It localises to the golgi apparatus membrane. Constituent of COPII-coated endoplasmic reticulum-derived transport vesicles. Required for efficient transport of a subset of secretory proteins to the Golgi. Facilitates retrograde transport from the Golgi to the endoplasmic reticulum. The protein is Endoplasmic reticulum vesicle protein 25 (erv25) of Schizosaccharomyces pombe (strain 972 / ATCC 24843) (Fission yeast).